The following is a 230-amino-acid chain: Orotidine 5'-phosphate decarboxylase (230 aa).

Residues aspartate 10, lysine 32, 59-68 (DLKYHDIPNT), threonine 119, arginine 180, glutamine 189, glycine 209, and arginine 210 contribute to the substrate site. Catalysis depends on lysine 61, which acts as the Proton donor.

Belongs to the OMP decarboxylase family. Type 1 subfamily. As to quaternary structure, homodimer.

It carries out the reaction orotidine 5'-phosphate + H(+) = UMP + CO2. The protein operates within pyrimidine metabolism; UMP biosynthesis via de novo pathway; UMP from orotate: step 2/2. Functionally, catalyzes the decarboxylation of orotidine 5'-monophosphate (OMP) to uridine 5'-monophosphate (UMP). This chain is Orotidine 5'-phosphate decarboxylase, found in Actinobacillus pleuropneumoniae serotype 5b (strain L20).